The following is a 304-amino-acid chain: Homoserine O-acetyltransferase (304 aa).

Cys142 acts as the Acyl-thioester intermediate in catalysis. The substrate site is built by Lys163 and Ser191. His234 functions as the Proton acceptor in the catalytic mechanism. The active site involves Glu236. Arg248 is a substrate binding site.

Belongs to the MetA family.

Its subcellular location is the cytoplasm. It carries out the reaction L-homoserine + acetyl-CoA = O-acetyl-L-homoserine + CoA. Its pathway is amino-acid biosynthesis; L-methionine biosynthesis via de novo pathway; O-acetyl-L-homoserine from L-homoserine: step 1/1. Transfers an acetyl group from acetyl-CoA to L-homoserine, forming acetyl-L-homoserine. The protein is Homoserine O-acetyltransferase of Thermotoga neapolitana (strain ATCC 49049 / DSM 4359 / NBRC 107923 / NS-E).